We begin with the raw amino-acid sequence, 352 residues long: Beta-methylmalyl-CoA dehydratase (352 aa).

One can recognise a MaoC-like domain in the interval 16-129 (LGQTIVHATP…GKTGVVYVHS (114 aa)). Substrate is bound by residues 62-65 (PIDS), 85-88 (IANL), and 96-98 (GAV).

In terms of assembly, homodimer.

The catalysed reaction is (2R,3S)-beta-methylmalyl-CoA = 2-methylfumaryl-CoA + H2O. Functionally, involved in the glyoxylate assimilation cycle used to regenerate acetyl-CoA and produce pyruvate as universal precursor for biosynthesis. Catalyzes the reversible dehydration of beta-methylmalyl-CoA ((2R,3S)-beta-methylmalyl-CoA) to yield mesaconyl-CoA (2-methylfumaryl-CoA). This Chloroflexus aurantiacus (strain ATCC 29366 / DSM 635 / J-10-fl) protein is Beta-methylmalyl-CoA dehydratase (mch).